A 358-amino-acid chain; its full sequence is Heterogeneous nuclear ribonucleoprotein A2 homolog 2 (358 aa).

RRM domains are found at residues 9–92 and 100–179; these read RKLF…ESAK and KKLF…LSKQ. Disordered stretches follow at residues 182 to 217 and 333 to 358; these read QDVQ…FRGG and YGGG…RNRY. A compositionally biased stretch (gly residues) spans 193-217; that stretch reads GNFGFGDSRGGGNFGSGPGGNFRGG. The interval 309 to 352 is nuclear targeting sequence; that stretch reads QQSSSYGPMKSGGNFGGNRSMGGPYGGGNYGPGNGSGASGGGGY.

It is found in the nucleus. Forms complexes (ribonucleosomes) with at least 20 other different hnRNP and heterogeneous nuclear RNA in the nucleus. The chain is Heterogeneous nuclear ribonucleoprotein A2 homolog 2 from Xenopus laevis (African clawed frog).